Consider the following 487-residue polypeptide: MNCQKCRQPLRLDGSLEDLNPAAYDVLVASASPQTLKKSSVPNPPLAQPQDQSRKSIYDRVSRNAGPPTFKRNHGSHPRDSSMSFVLLSESQMARPTPSSDPPTTPTVLRRASSSKSNADNPDAPMGSEMDRINRLFDVLSARSDVDHPICVECTEMLVEGLQKKLEIASRERDSYAKHLKEAKANKPSEEDMKTQEEALRKAERDRAAAMEELKKLESEKTSLDEELVLLEEESRQLDKEEEKFWRERNDFATRMADFQAERDSINAKYSNDSQLLEKLQRSNVYNDTFCISHDGSFATINGLRLGRLSNKPVDWPEINAAWGHALLLLVTVADKLAYRFDGYDPQPMGSTSRIIRYEVPSPSSSRLGTRAASVPPKRHILELYSSGDMPLGLTFMHRRFDNAMVGFLELVRQLGAFVHRQTEATGTPLSLPYKIDGDKIGDVSIKLGIAQDDGWTKACKLTLTCCKFLLAHASNVTSNARNGGSQ.

A disordered region spans residues 33 to 129; that stretch reads PQTLKKSSVP…DNPDAPMGSE (97 aa). Basic and acidic residues predominate over residues 52–62; sequence QSRKSIYDRVS. Over residues 81–94 the composition is skewed to polar residues; the sequence is SSMSFVLLSESQMA. The stretch at 152–282 forms a coiled coil; the sequence is VECTEMLVEG…DSQLLEKLQR (131 aa). Residues 283-480 form a BARA region; sequence SNVYNDTFCI…LAHASNVTSN (198 aa). Residues 456 to 481 are required for membrane-association, autophagic function during starvation and normal autophagosome morphology; the sequence is WTKACKLTLTCCKFLLAHASNVTSNA.

Belongs to the beclin family. Component of the autophagy-specific VPS34 PI3-kinase complex I; and of the VPS34 PI3-kinase complex II.

It is found in the endosome membrane. The protein resides in the vacuole membrane. The protein localises to the preautophagosomal structure membrane. Functionally, required for cytoplasm to vacuole transport (Cvt), autophagy, nucleophagy, and mitophagy, as a part of the autophagy-specific VPS34 PI3-kinase complex I. This complex is essential to recruit the ATG8-phosphatidylinositol conjugate and the ATG12-ATG5 conjugate to the pre-autophagosomal structure. Also involved in endosome-to-Golgi retrograde transport as part of the VPS34 PI3-kinase complex II. Autophagy is required for proper vegetative growth, asexual/sexual reproduction, and full virulence. Autophagy is particularly involved in the biosynthesis of deoxynivalenol (DON), an important virulence determinant. The protein is Vacuolar protein sorting-associated protein 30 of Gibberella zeae (strain ATCC MYA-4620 / CBS 123657 / FGSC 9075 / NRRL 31084 / PH-1) (Wheat head blight fungus).